An 84-amino-acid polypeptide reads, in one-letter code: MSILSFLLGEKKKTASVAKERLQIILAHERTASGAPADYLPALQRELVAVISKYVKIGNDDIKVNLERQDNLEVLEVKIEIPQA.

Belongs to the MinE family.

Its function is as follows. Prevents the cell division inhibition by proteins MinC and MinD at internal division sites while permitting inhibition at polar sites. This ensures cell division at the proper site by restricting the formation of a division septum at the midpoint of the long axis of the cell. This is Cell division topological specificity factor from Ralstonia pickettii (strain 12J).